The sequence spans 307 residues: Homoserine O-acetyltransferase (307 aa).

Cys-142 (acyl-thioester intermediate) is an active-site residue. The substrate site is built by Lys-163 and Ser-192. The Proton acceptor role is filled by His-235. Glu-237 is a catalytic residue. Arg-249 is a substrate binding site.

Belongs to the MetA family.

The protein resides in the cytoplasm. The catalysed reaction is L-homoserine + acetyl-CoA = O-acetyl-L-homoserine + CoA. Its pathway is amino-acid biosynthesis; L-methionine biosynthesis via de novo pathway; O-acetyl-L-homoserine from L-homoserine: step 1/1. In terms of biological role, transfers an acetyl group from acetyl-CoA to L-homoserine, forming acetyl-L-homoserine. The sequence is that of Homoserine O-acetyltransferase from Rhizobium johnstonii (strain DSM 114642 / LMG 32736 / 3841) (Rhizobium leguminosarum bv. viciae).